Consider the following 461-residue polypeptide: Deoxyhypusine synthase (461 aa).

Spermidine-binding positions include 166-167, glutamate 331, histidine 377, 403-405, and 412-418; these read EH, GSD, and EAVSWGK. Lysine 418 serves as the catalytic Nucleophile. The helical transmembrane segment at 428-448 threads the bilayer; it reads VYSEVTIVFPLIVVHVFVAWV.

The protein belongs to the deoxyhypusine synthase family. In terms of assembly, heterotetramer formed by a homodimer of the non-catalytic regulatory subunit DHSp and a homodimer of the catalytic subunit DHSc where DHSc appears to bind spermidine and DHSp appears to bind NAD(+). It depends on NAD(+) as a cofactor.

Its subcellular location is the membrane. The catalysed reaction is [eIF5A protein]-L-lysine + spermidine = [eIF5A protein]-deoxyhypusine + propane-1,3-diamine. It functions in the pathway protein modification; eIF5A hypusination. Allosterically activated by DHSp. Inhibited by spermididine analog N1-guanyl-1,7-diamineoheptane (GC7). In association with the non-catalytic regulatory subunit DHSp, catalyzes the NAD-dependent oxidative cleavage of spermidine and the subsequent transfer of the butylamine moiety of spermidine to the epsilon-amino group of a specific lysine residue of the eIF5A precursor protein to form the intermediate deoxyhypusine residue. Regulates protein levels of its regulatory subunit DHSp. Required for cell growth and survival. The protein is Deoxyhypusine synthase of Trypanosoma brucei brucei (strain 927/4 GUTat10.1).